Here is a 388-residue protein sequence, read N- to C-terminus: Na(+)/H(+) antiporter NhaA (388 aa).

Over 1–11 (MKHLHRFFSSD) the chain is Cytoplasmic. The helical transmembrane segment at 12-31 (ASGGIILIIAAILAMMMANS) threads the bilayer. The Periplasmic segment spans residues 32-58 (GATSGWYHDFLETPVQLRVGSLEINKN). The chain crosses the membrane as a helical span at residues 59–80 (MLLWINDALMAVFFLLVGLEVK). Residues 81–96 (RELMQGSLASLRQAAF) are Cytoplasmic-facing. A helical transmembrane segment spans residues 97-116 (PVIAAIGGMIVPALLYLAFN). The Periplasmic segment spans residues 117–122 (YADPIT). Residues 123 to 130 (REGWAIPA) traverse the membrane as a helical segment. The Cytoplasmic portion of the chain corresponds to 131 to 154 (ATDIAFALGVLALLGSRVPLALKI). The helical transmembrane segment at 155-176 (FLMALAIIDDLGAIIIIALFYT) threads the bilayer. Topologically, residues 177–180 (NDLS) are periplasmic. A helical transmembrane segment spans residues 181–200 (MASLGVAAVAIAVLAVLNLC). Over 201–204 (GVRR) the chain is Cytoplasmic. Residues 205–222 (TGVYILVGVVLWTAVLKS) form a helical membrane-spanning segment. Position 223 (G223) is a topological domain, periplasmic. A helical membrane pass occupies residues 224–236 (VHATLAGVIVGFF). The Cytoplasmic portion of the chain corresponds to 237–253 (IPLKEKHGRSPAKRLEH). A helical membrane pass occupies residues 254 to 272 (VLHPWVAYLILPLFAFANA). Topologically, residues 273 to 286 (GVSLQGVTLDGLTS) are periplasmic. A helical membrane pass occupies residues 287–310 (ILPLGIIAGLLIGKPLGISLFCWL). The Cytoplasmic portion of the chain corresponds to 311-339 (ALRLKLAHLPEGTTYQQIMAVGILCGIGF). The helical transmembrane segment at 340–350 (TMSIFIASLAF) threads the bilayer. The Periplasmic portion of the chain corresponds to 351-357 (GSVDPEL). Residues 358 to 380 (INWAKLGILVGSISSAVIGYSWL) form a helical membrane-spanning segment. Residues 381–388 (RVRLRPSV) lie on the Cytoplasmic side of the membrane.

It belongs to the NhaA Na(+)/H(+) (TC 2.A.33) antiporter family.

It is found in the cell inner membrane. The catalysed reaction is Na(+)(in) + 2 H(+)(out) = Na(+)(out) + 2 H(+)(in). In terms of biological role, na(+)/H(+) antiporter that extrudes sodium in exchange for external protons. This is Na(+)/H(+) antiporter NhaA from Shigella boydii serotype 4 (strain Sb227).